An 808-amino-acid polypeptide reads, in one-letter code: MSEFEEKLNESSYGADSIKVLKGLEAVRKRPGMYIGDVGDGSGLHHMIYEVVDNAIDEALAGYCDLVRVVLNKNGSVTVSDNGRGIPVEIHEEEGISAAEVIMTQLHAGGKFDQNSYKVSGGLHGVGVSVVNALSDWLELRIWRNNTEHLIRFNNGITEAPLAVVKENVDKKGTEVTFFPSVETFTNIEFDFSIIEHRLRELAFLNSGVKILLTDNRFEEVKEVEFYYTGGIEAYVKYLDRAKHAVHSCIVVNADNTESGISLELAMHWNDSYHENILCFTNNIRQRDGGTHLSAFKSGLTRVITAYLENTGLNKKAKNAFSGEDTREGICCVLSVKVPDPKFSSQTKDKLVSSEVRPIVENAVYTKVLEWFEEHPADAKLIINKIMEAANAREAARKARELTRRKSVLEVSNLPGKLADCHAKDPAVSELFIVEGDSAGGTAKQGRDSKIQAILPLRGKILNVERARFDKMLGSDQIGTLITALGTGVDNREFSLEKLRYHKVIIMTDADVDGSHIRTLLLTFFYRHMPELINKGYLYIAQPPLYKVKKGASELYLKNEQALQDYLVKSAISDATLTLDNKEQLTNENLEELMSKVIKFNSLLDHASKKFNRSITEILAINDLLNNKIFDNESDSRLKKALNALNSLEQSPDKTDWEVLKHENKIEFFRFSRGLKERKILLREQLESFEFINISKLALTIFDVFNKQLKLVVKNQEFDILTPSILLNTIIECGKKGISVQRFKGLGEMNSDQLWDTTLDPKKRTLMQVRVAEVDEAEGIFSTLMGDVVEPRRQFIQSNALNVVNLDV.

The Toprim domain occupies 429 to 544 (SELFIVEGDS…KGYLYIAQPP (116 aa)). Mg(2+) is bound by residues Glu435, Asp509, and Asp511.

The protein belongs to the type II topoisomerase GyrB family. In terms of assembly, heterotetramer, composed of two GyrA and two GyrB chains. In the heterotetramer, GyrA contains the active site tyrosine that forms a transient covalent intermediate with DNA, while GyrB binds cofactors and catalyzes ATP hydrolysis. It depends on Mg(2+) as a cofactor. Mn(2+) serves as cofactor. Ca(2+) is required as a cofactor.

Its subcellular location is the cytoplasm. The enzyme catalyses ATP-dependent breakage, passage and rejoining of double-stranded DNA.. Functionally, a type II topoisomerase that negatively supercoils closed circular double-stranded (ds) DNA in an ATP-dependent manner to modulate DNA topology and maintain chromosomes in an underwound state. Negative supercoiling favors strand separation, and DNA replication, transcription, recombination and repair, all of which involve strand separation. Also able to catalyze the interconversion of other topological isomers of dsDNA rings, including catenanes and knotted rings. Type II topoisomerases break and join 2 DNA strands simultaneously in an ATP-dependent manner. This Rickettsia bellii (strain RML369-C) protein is DNA gyrase subunit B.